The sequence spans 399 residues: Subtilisin-like protease 1 (399 aa).

A signal peptide spans 1-19; sequence MGVFRFISISLAAVSAANA. The propeptide occupies 20 to 116; the sequence is AQILSMPHAQ…VEPDTIISVH (97 aa). In terms of domain architecture, Inhibitor I9 spans 34–115; it reads SYIVMMKDDT…FVEPDTIISV (82 aa). In terms of domain architecture, Peptidase S8 spans 126 to 399; it reads SWGLARISNP…TNVLINNGGA (274 aa). Residues D158 and H190 each act as charge relay system in the active site. The segment at 175 to 198 is disordered; the sequence is GSNQVNDGDDRDGSGHGTHTSGTM. N-linked (GlcNAc...) asparagine glycosylation occurs at N251. Polar residues predominate over residues 282 to 294; that stretch reads NDNQDAQSSSPAS. The disordered stretch occupies residues 282–312; that stretch reads NDNQDAQSSSPASEPSVCTVGSSAEDDSRSS. S345 functions as the Charge relay system in the catalytic mechanism.

The protein belongs to the peptidase S8 family.

The protein resides in the secreted. In terms of biological role, secreted subtilisin-like serine protease with keratinolytic activity that contributes to pathogenicity. The protein is Subtilisin-like protease 1 (SUB1) of Arthroderma benhamiae (Trichophyton mentagrophytes).